The following is a 356-amino-acid chain: Tyrosine recombinase XerS (356 aa).

The Core-binding (CB) domain maps to 16–121; it reads LMPWFVLEYY…ALSSLYKYLT (106 aa). The Tyr recombinase domain maps to 169–354; the sequence is KFLDYVENEY…VNDEQKNALD (186 aa). Residues R210, K234, H306, R309, and H332 contribute to the active site. Y341 functions as the O-(3'-phospho-DNA)-tyrosine intermediate in the catalytic mechanism.

This sequence belongs to the 'phage' integrase family. XerS subfamily.

The protein resides in the cytoplasm. FtsK is required for recombination. Its function is as follows. Site-specific tyrosine recombinase, which acts by catalyzing the cutting and rejoining of the recombining DNA molecules. Essential to convert dimers of the bacterial chromosome into monomers to permit their segregation at cell division. This Streptococcus thermophilus (strain CNRZ 1066) protein is Tyrosine recombinase XerS.